Here is a 333-residue protein sequence, read N- to C-terminus: Tetraacyldisaccharide 4'-kinase (333 aa).

57–64 (IVGGAGKT) contributes to the ATP binding site.

This sequence belongs to the LpxK family.

It catalyses the reaction a lipid A disaccharide + ATP = a lipid IVA + ADP + H(+). The protein operates within glycolipid biosynthesis; lipid IV(A) biosynthesis; lipid IV(A) from (3R)-3-hydroxytetradecanoyl-[acyl-carrier-protein] and UDP-N-acetyl-alpha-D-glucosamine: step 6/6. Functionally, transfers the gamma-phosphate of ATP to the 4'-position of a tetraacyldisaccharide 1-phosphate intermediate (termed DS-1-P) to form tetraacyldisaccharide 1,4'-bis-phosphate (lipid IVA). In Dechloromonas aromatica (strain RCB), this protein is Tetraacyldisaccharide 4'-kinase.